The primary structure comprises 327 residues: Ribose operon repressor (327 aa).

An HTH lacI-type domain is found at 1–56; sequence MTTIKQVALEAGVSKSTVSRFIAQNGYVSDEAREKIERAIKKLNFRPNLSAQSLKT. Residues 4–23 constitute a DNA-binding region (H-T-H motif); sequence IKQVALEAGVSKSTVSRFIA.

Functionally, transcriptional repressor for the ribose rbsDACBK operon. This Lactococcus lactis subsp. lactis (strain IL1403) (Streptococcus lactis) protein is Ribose operon repressor (rbsR).